The following is a 301-amino-acid chain: Tetrapeptide repeat homeobox protein 2 (301 aa).

2 disordered regions span residues 1 to 27 and 273 to 301; these read MQDP…RTVY and SLST…LLDL. Composition is skewed to basic and acidic residues over residues 16 to 26 and 281 to 292; these read PPRRQRQERTV and YKEEDGFVDKNH. A DNA-binding region (homeobox) is located at residues 20-79; it reads QRQERTVYTESQQKVLEFYFQKDQYPNYDQRLNLAEMLSLREQQLQVWFKNRRAKLARER.

Belongs to the paired homeobox family.

The protein localises to the nucleus. Functionally, transcription factor expressed after fertilization required for zygotic genome activation (ZGA), a critical event in early embryonic development during which the developmental control passes from maternally provided mRNAs to the expression of the zygotic genome after fertilization. Binds and activates expression of key ZGA marker genes, such as NANOGNB, ZSCAN4, DUXB, KLF5 and DPPA3. Binds to regulatory DNA sequences containing a 5'-TAATCC-3' sequence motif. The chain is Tetrapeptide repeat homeobox protein 2 from Homo sapiens (Human).